We begin with the raw amino-acid sequence, 580 residues long: Arrestin domain-containing protein A (580 aa).

Asn-27, Asn-33, and Asn-60 each carry an N-linked (GlcNAc...) asparagine glycan. The tract at residues 31 to 54 is disordered; that stretch reads NVNTTSSHHHHHSNSGNAEVSFNG. 2 disordered regions span residues 67 to 86 and 95 to 114; these read ETHS…EISI and MTMS…HKES. A helical membrane pass occupies residues 118 to 138; it reads NLSLGGIVGAVVGAVTGGVMI. N-linked (GlcNAc...) asparagine glycosylation is found at Asn-149, Asn-341, and Asn-342. The FYVE-type zinc finger occupies 468 to 528; it reads DEHATACRKC…VCEECYPIAT (61 aa). Cys-474, Cys-477, Cys-490, Cys-493, Cys-498, Cys-501, Cys-520, and Cys-523 together coordinate Zn(2+).

The protein belongs to the arrestin family.

The protein localises to the membrane. This is Arrestin domain-containing protein A (adcA) from Dictyostelium discoideum (Social amoeba).